A 28-amino-acid chain; its full sequence is Expansin-B1 (28 aa).

In terms of domain architecture, Expansin-like CBD spans 11–28 (MLLSLQGPXSLRMVSESG).

This sequence belongs to the expansin family. Expansin B subfamily.

The protein resides in the secreted. It is found in the cell wall. It localises to the membrane. In terms of biological role, may cause loosening and extension of plant cell walls by disrupting non-covalent bonding between cellulose microfibrils and matrix glucans. This is Expansin-B1 from Pseudotsuga menziesii (Douglas-fir).